Consider the following 379-residue polypeptide: Inactive 2'-5'-oligoadenylate synthase 1B (379 aa).

Over 1–355 (MEQELRSIPA…VPTEVDIPSQ (355 aa)) the chain is Cytoplasmic. The chain crosses the membrane as a helical; Anchor for type IV membrane protein span at residues 356 to 374 (NYFFHIICLIFWLLLRLIF). The Extracellular segment spans residues 375–379 (GKHSV).

It belongs to the 2-5A synthase family. Interacts with OSBPL1A and ABCF3. Highly expressed in the brain, liver, spleen and heart.

It is found in the endoplasmic reticulum membrane. In terms of biological role, does not have 2'-5'-OAS activity, but can bind double-stranded RNA. Displays antiviral activity against viruses via an alternative antiviral pathway independent of RNase L. The protein is Inactive 2'-5'-oligoadenylate synthase 1B (Oas1b) of Rattus norvegicus (Rat).